A 514-amino-acid chain; its full sequence is 3-octaprenyl-4-hydroxybenzoate carboxy-lyase (514 aa).

N177 is a Mn(2+) binding site. Prenylated FMN-binding positions include 180–182, 194–196, and 199–200; these read IYR, RWL, and RG. E243 contributes to the Mn(2+) binding site. Residue D314 is the Proton donor of the active site.

This sequence belongs to the UbiD family. As to quaternary structure, homohexamer. The cofactor is prenylated FMN. Mn(2+) is required as a cofactor.

The protein resides in the cell membrane. The enzyme catalyses a 4-hydroxy-3-(all-trans-polyprenyl)benzoate + H(+) = a 2-(all-trans-polyprenyl)phenol + CO2. The protein operates within cofactor biosynthesis; ubiquinone biosynthesis. Its function is as follows. Catalyzes the decarboxylation of 3-octaprenyl-4-hydroxy benzoate to 2-octaprenylphenol, an intermediate step in ubiquinone biosynthesis. In Bordetella parapertussis (strain 12822 / ATCC BAA-587 / NCTC 13253), this protein is 3-octaprenyl-4-hydroxybenzoate carboxy-lyase.